Consider the following 348-residue polypeptide: Phosphate acyltransferase (348 aa).

The protein belongs to the PlsX family. Homodimer. Probably interacts with PlsY.

The protein resides in the cytoplasm. The enzyme catalyses a fatty acyl-[ACP] + phosphate = an acyl phosphate + holo-[ACP]. Its pathway is lipid metabolism; phospholipid metabolism. Its function is as follows. Catalyzes the reversible formation of acyl-phosphate (acyl-PO(4)) from acyl-[acyl-carrier-protein] (acyl-ACP). This enzyme utilizes acyl-ACP as fatty acyl donor, but not acyl-CoA. The chain is Phosphate acyltransferase from Francisella tularensis subsp. tularensis (strain FSC 198).